Consider the following 250-residue polypeptide: DNA repair protein RecO (250 aa).

The protein belongs to the RecO family.

In terms of biological role, involved in DNA repair and RecF pathway recombination. This Staphylococcus aureus (strain bovine RF122 / ET3-1) protein is DNA repair protein RecO.